The following is a 369-amino-acid chain: 4-hydroxy-3-methylbut-2-en-1-yl diphosphate synthase (flavodoxin) (369 aa).

Positions 270, 273, 305, and 312 each coordinate [4Fe-4S] cluster.

Belongs to the IspG family. The cofactor is [4Fe-4S] cluster.

The enzyme catalyses (2E)-4-hydroxy-3-methylbut-2-enyl diphosphate + oxidized [flavodoxin] + H2O + 2 H(+) = 2-C-methyl-D-erythritol 2,4-cyclic diphosphate + reduced [flavodoxin]. Its pathway is isoprenoid biosynthesis; isopentenyl diphosphate biosynthesis via DXP pathway; isopentenyl diphosphate from 1-deoxy-D-xylulose 5-phosphate: step 5/6. Converts 2C-methyl-D-erythritol 2,4-cyclodiphosphate (ME-2,4cPP) into 1-hydroxy-2-methyl-2-(E)-butenyl 4-diphosphate. This chain is 4-hydroxy-3-methylbut-2-en-1-yl diphosphate synthase (flavodoxin), found in Pseudomonas fluorescens (strain SBW25).